The primary structure comprises 1267 residues: MSSTILTQFGPFIESISGIIDQSNDIFEEAAKAFSAFTRSDVYKALDEIPFHDHATVHIPPTIYSKPSHDSYYYVDALNRVRRRTYQGDDDVYVPNCSIVELLEPHETLTSYGRLSSAIEARAKEGDPQARIATTYARISESQARQIKAPLEKFVLALLVAESGDALYDPILQKYDDVADLTHNCPLWCFREICRHVSGPLPDRAPYLYLSAGVFWLMSPRMTSAIPPLLSDLVNLAILQQTAGLDPSLVKMGVQVCLQAAASASYAWYVLKTKSVFPQNTLHSMYETLEGGFCPNLAWLEPRSDYKFMYMGATPLSGKYARTAPSNETRARQLGEKYGLSTIIGDLRQRTRQFTKHDFASVRYIRDAMACTSGIFLVRTPTETVLQEYTQSPEIKVPIPQKDWTGPIGEIRVLKDTTSSIARYLYRTWYLAAARMASQPRTWDPLFQAIMRSQYVTARGGSGAALRESLYAINVSLPDFKGLPVKAATKIFQAAQLANLPFSHTSVAILADTSMGLRNQVQRRPRSIMPLNVPQQQVSAPHTLTADYINYHMNLSTTSGSAVIEKVIPLGVYASSPPNQSINIDISACDASITWDFFLSVIMAAIHEGVASSSIGKPFMGVPASIVNDESVVGVRAARPISGMQNMVQHLSKLYKRGFSYRVNDSFSPGNDFTHMTTTFPSGSTATSTEHTANNSTMMETFLNVWGPEHTNDPDVLRLMRSLTIQRNYVCQGDDGLMIIDGTTAGKVSSETIQKMLELISAYGEEFGWKYDIAYDGTAEYLKLYFIFGCRIPNLSRHPIVGKERANSSAEEPWPAILDQVMGIFFNGVHDGLQWQRWIRYCSSLCCAFSRQRTMIGEEVRYLQYPMWSFVYWGLPPVKLFGSDPWIFSWYMPTGDLGMYSWISLIRPLMTRWMVANGYVSERCSSIFGNADYRRCFNDIRLYQGYYMARLPRNPKKSGRAAPRETREQFTQALSDYLMQNPELKSRVLRGRSEWEKYGAGIIHNPPSLFDVPHKWYQGAQEAATATREELSDMDDTLLRSRRHTYSSFSKLLEAYLRVRWRMCEAREPSVDLRLPLCAGIDPLNSDPFLKMVSVGPMLQSTRKYFAQTLFMAKTVSGLDVNAIDSALLRLRTLGADKKALTAQLLMVGLQESEADALAGKIMLQDVNTVQLARVVNLAVPDTWMSLDFDSMFKHHVNLLPKDGRHLNTDIPPRMGWLRAILRFLGAGVAMTATGVAVNVYLEDIDGGGRSLGQRFMTWMRQEGRSA.

Residues 555 to 792 (LSTTSGSAVI…KLYFIFGCRI (238 aa)) enclose the RdRp catalytic domain.

This sequence belongs to the reoviridae RNA-directed RNA polymerase family.

The protein localises to the virion. The catalysed reaction is RNA(n) + a ribonucleoside 5'-triphosphate = RNA(n+1) + diphosphate. Functionally, RNA-directed RNA polymerase that is involved in transcription and genome replication. Following infection, it catalyzes the synthesis of fully conservative plus strands. After core assembly, which consists in recruitment of one capped plus-strand for each genomic segments and polymerase complexes, the polymerase switches mode and catalyzes the synthesis of complementary minus-strands. In Mammalia (T2J), this protein is RNA-directed RNA polymerase lambda-3 (L1).